The sequence spans 560 residues: Cilia- and flagella-associated protein 184 (560 aa).

Positions 1 to 12 (MEGGSEHTKDPG) are enriched in basic and acidic residues. A disordered region spans residues 1–209 (MEGGSEHTKD…QEEGKPLGGR (209 aa)). Acidic residues-rich tracts occupy residues 41 to 61 (GELESEPEEEEEEEEEEEEEA) and 101 to 110 (EPEEPAEAGA). 2 stretches are compositionally biased toward basic and acidic residues: residues 127-144 (AEARAEELEQAAEGKEVR) and 179-209 (ETRRDGAESEGRAGEGRPAKSQEEGKPLGGR). 2 coiled-coil regions span residues 357-481 (QAAL…QGRD) and 510-536 (DSLLRDLEEKVDKTQLLHQRLESLKRH).

The protein belongs to the CFAP184 family. In terms of assembly, forms a complex with CFAP263; the interaction is required for functional activity in cilia.

It is found in the cell projection. It localises to the cilium. Its subcellular location is the cytoplasm. The protein resides in the cytoskeleton. The protein localises to the microtubule organizing center. It is found in the centrosome. In terms of biological role, in complex with CFAP263, acts as a regulator of ciliary beating that connects radial spoke 3 (RS3) to the inner dynein arm (IDA) and the nexin-dynein regulatory complex (N-DRC). The complex is positioned parallel to N-DRC and forms a connection between the arch at the base of RS3, the IDA tail and N-DRC. The protein is Cilia- and flagella-associated protein 184 (CFAP184) of Macaca fascicularis (Crab-eating macaque).